The sequence spans 122 residues: Small ribosomal subunit protein uS13 (122 aa).

Residues 92–122 (HRKQLPVRGQRTHTNARTRKGKAKPIAGKKK) form a disordered region.

Belongs to the universal ribosomal protein uS13 family. Part of the 30S ribosomal subunit. Forms a loose heterodimer with protein S19. Forms two bridges to the 50S subunit in the 70S ribosome.

Located at the top of the head of the 30S subunit, it contacts several helices of the 16S rRNA. In the 70S ribosome it contacts the 23S rRNA (bridge B1a) and protein L5 of the 50S subunit (bridge B1b), connecting the 2 subunits; these bridges are implicated in subunit movement. Contacts the tRNAs in the A and P-sites. The sequence is that of Small ribosomal subunit protein uS13 from Methylobacterium radiotolerans (strain ATCC 27329 / DSM 1819 / JCM 2831 / NBRC 15690 / NCIMB 10815 / 0-1).